A 1103-amino-acid polypeptide reads, in one-letter code: Ataxin-2 homolog (1103 aa).

Residues 1-10 are compositionally biased toward basic residues; it reads MSQSKDKKKF. The interval 1–75 is disordered; sequence MSQSKDKKKF…QQQQQQQQPF (75 aa). Residues 11 to 28 are compositionally biased toward gly residues; the sequence is VGGGGGGGGNNSGGGGYG. Low complexity-rich tracts occupy residues 33–44 and 56–73; these read NNNNNNRNSSNN and HHQQQQQQQQQQQQQQQQ. One can recognise a Sm domain in the interval 84 to 166; it reads RTVFMSMSLV…FLQITATGVV (83 aa). A coiled-coil region spans residues 258–287; the sequence is EFYKINQSVAEKKAQEIENEKSGNIHLLEE. 5 disordered regions span residues 305-474, 516-557, 615-763, 901-920, and 930-1103; these read VVRK…RESP, TNKS…APKS, LVIK…NNTT, HTMKPPGSLQPGGGGVVQPQ, and QPQG…NQYH. Positions 312 to 356 are enriched in low complexity; that stretch reads PTSTTSTTTSPPTQNPTPSSSVYIPPSKRNNNNNTPSTPSVTSPP. Over residues 358 to 371 the composition is skewed to basic and acidic residues; sequence VDKKHQQTHQDKKQ. Residues 366–403 are a coiled coil; it reads HQDKKQTQQQQQQQQQQQQQQQQQQQQQQQQQQQQQTQ. The segment covering 372-463 has biased composition (low complexity); it reads TQQQQQQQQQ…NNTPTATNTN (92 aa). A compositionally biased stretch (polar residues) spans 516-529; sequence TNKSMNKSGSNIST. Composition is skewed to low complexity over residues 530–544, 637–676, and 683–694; these read TPVNGSGNVGPNGTP, PTQLSLSGSSTSTNTSTTSPPTTNTTTTTTTATNSTTPST, and TTTPITTTILTE. Residues 691-730 are a coiled coil; it reads ILTENKSDDKEKEKEKEKEKVDEKEKEKEKEKSDEKDKDQ. Residues 695–741 show a composition bias toward basic and acidic residues; the sequence is NKSDDKEKEKEKEKEKVDEKEKEKEKEKSDEKDKDQSSTLVEKKDES. The span at 742 to 763 shows a compositional bias: low complexity; sequence SSSSNTTTTTTNTTNNNNNNTT. Residues 930-957 are compositionally biased toward low complexity; that stretch reads QPQGGVVQPSAGGAPKTMYQQQQQQQQQ. Positions 960-969 are enriched in gly residues; the sequence is QPGGPMGVQR. A compositionally biased stretch (low complexity) spans 974–984; sequence PPQQQPQQQQQ. Positions 1020–1031 are enriched in pro residues; sequence YAVPHPQYPMPP. Residues 1062 to 1076 show a composition bias toward low complexity; the sequence is QVVSQNSPQQDSPSN.

Belongs to the ataxin-2 family.

This chain is Ataxin-2 homolog (atxn2), found in Dictyostelium discoideum (Social amoeba).